Reading from the N-terminus, the 429-residue chain is Probable alcohol acetyltransferase orf1 (429 aa).

Belongs to the alcohol acetyltransferase FCK4 family.

It functions in the pathway secondary metabolite biosynthesis. Its function is as follows. Probable alcohol acetyltransferase; part of the gene cluster that mediates the biosynthesis of the glycolipid biosurfactant ustilagic acid (UA). UA is a secreted cellobiose glycolipid that is toxic for many microorganisms and confers biocontrol activity to U.maydis. UA consists of 15,16-dihydroxypalmitic or 2,15,16-trihydroxypalmitic acid, which is O-glycosidically linked to cellobiose at its terminal hydroxyl group. In addition, the cellobiose moiety is acetylated and acylated with a short-chain hydroxy fatty acid. UA biosynthesis starts with omega-hydroxylation of palmitic acid catalyzed by the cytochrome P450 monooxygenase cyp1. Terminal hydroxylation of palmitic acid precedes subterminal hydroxylation catalyzed by the cytochrome P450 monooxygenase cyp2. Sequential glucosylation of the hydroxy fatty acid is probably catalyzed by the glycosyltransferase ugt1. The cellobiose lipid is further decorated by acetylation of the proximal glucose residue and by acylation with a short-chain beta-hydroxy fatty acid at the distal glucose residue. The acyltransferase uat1 may be a good candidate for catalyzing either acetylation or acylation of the cellobiose lipid. The fatty acid synthase fas2 may be involved in synthesis of the carbon backbone of the short-chain beta-hydroxy fatty acid esterified to the cellobiose disaccharide. The secreted UA consists of a mixture of both alpha-hydroxylated and non-hydroxylated glycolipids; therefore, alpha-hydroxylation of the long-chain fatty, catalyzed by the fatty acid hydroxylase ahd1, occurs late in UA biosynthesis and may be the last step before secretion. This chain is Probable alcohol acetyltransferase orf1, found in Mycosarcoma maydis (Corn smut fungus).